The primary structure comprises 360 residues: Ribosomal RNA large subunit methyltransferase F (360 aa).

The interval 1–38 (MTRSTTPPMRAKHSSAKRSPSRSAAKVNPVSVKPNKPL) is disordered. Basic residues predominate over residues 10–20 (RAKHSSAKRSP).

The protein belongs to the methyltransferase superfamily. METTL16/RlmF family.

It is found in the cytoplasm. It catalyses the reaction adenosine(1618) in 23S rRNA + S-adenosyl-L-methionine = N(6)-methyladenosine(1618) in 23S rRNA + S-adenosyl-L-homocysteine + H(+). Specifically methylates the adenine in position 1618 of 23S rRNA. This Shewanella frigidimarina (strain NCIMB 400) protein is Ribosomal RNA large subunit methyltransferase F.